Consider the following 130-residue polypeptide: MKKNGILNSHIAKVLADLGHTDTIVIADCGLPIPEGPVKIDLSLTIGTPSFQEVTSLLLQEMAVEHITVASEIQEANERDHLFLKKAFSKPLHDVDHETFKDMTKQAKAVIRTGEATPYANCILHAGVIF.

H20 (proton donor) is an active-site residue. Substrate contacts are provided by residues D28, H97, and Y119–N121.

Belongs to the RbsD / FucU family. RbsD subfamily. In terms of assembly, homodecamer.

It is found in the cytoplasm. It carries out the reaction beta-D-ribopyranose = beta-D-ribofuranose. The protein operates within carbohydrate metabolism; D-ribose degradation; D-ribose 5-phosphate from beta-D-ribopyranose: step 1/2. Catalyzes the interconversion of beta-pyran and beta-furan forms of D-ribose. The protein is D-ribose pyranase of Bacillus pumilus (strain SAFR-032).